Consider the following 326-residue polypeptide: tRNA(Ile)-lysidine synthase (326 aa).

25–30 serves as a coordination point for ATP; the sequence is SGGQDS.

It belongs to the tRNA(Ile)-lysidine synthase family.

Its subcellular location is the cytoplasm. It carries out the reaction cytidine(34) in tRNA(Ile2) + L-lysine + ATP = lysidine(34) in tRNA(Ile2) + AMP + diphosphate + H(+). Ligates lysine onto the cytidine present at position 34 of the AUA codon-specific tRNA(Ile) that contains the anticodon CAU, in an ATP-dependent manner. Cytidine is converted to lysidine, thus changing the amino acid specificity of the tRNA from methionine to isoleucine. This is tRNA(Ile)-lysidine synthase from Prochlorococcus marinus (strain NATL1A).